Consider the following 433-residue polypeptide: MSDLTDIQEEITRHEQQLVVARQKLKDAERAVEVDPDDVNKNTLQARQQTVSALEDKLADYKRRMADAVSRKKMDTKPTDPTGIEPDDHLKERSSLRYGNVLDVNAIDIEEPSGQTADWYTIGVYVIGFTIPIILKALYMLSTRGRQTVKENKGTRIRFKDDTSFEDINGIRRPKHLYVSMPTAQSTMKAEELTPGRFRTIVCGLFPTQIQVRNIMSPVMGVIGFSFFVKDWPERIRDFMEKECPFIKPEVKPGTPAQEIEFLKRNRVYFMTRQDVLDKNHVADIDKLIDYAASGDPTSPDDIESPNAPWVFACAPDRCPPTCIYVVGMAELGAFFSILQDMRNTIMASKTVGTAEEKLKKKSSFYQSYLRRTQSMGIQLDQRIILLYMLEWGKEMVDHFHLGDDMDPELRGLAQSLIDQKVKEISNQEPLKI.

The interval 1–50 (MSDLTDIQEEITRHEQQLVVARQKLKDAERAVEVDPDDVNKNTLQARQQT) is rdRP binding. 2 homomultimerization regions span residues 1–79 (MSDL…TKPT) and 100–125 (NVLD…IGVY). The tract at residues 1–100 (MSDLTDIQEE…KERSSLRYGN (100 aa)) is chaperone activity. Residues 1-175 (MSDLTDIQEE…EDINGIRRPK (175 aa)) form a viral panhandle binding region. Positions 4–71 (LTDIQEEITR…KRRMADAVSR (68 aa)) form a coiled coil. A compositionally biased stretch (basic and acidic residues) spans 67–78 (DAVSRKKMDTKP). Positions 67–92 (DAVSRKKMDTKPTDPTGIEPDDHLKE) are disordered. An interaction with glycoprotein N region spans residues 80-248 (DPTGIEPDDH…FMEKECPFIK (169 aa)). Residues 150 to 175 (KENKGTRIRFKDDTSFEDINGIRRPK) form an interaction with host RPS19 region. Positions 175–217 (KHLYVSMPTAQSTMKAEELTPGRFRTIVCGLFPTQIQVRNIMS) are viral RNA-binding. A YxxL motif is present at residues 178 to 181 (YVSM). Residues 188–191 (MKAE) form an interaction with host UBE2I/UBC9 region. A homomultimerization region spans residues 377–425 (GIQLDQRIILLYMLEWGKEMVDHFHLGDDMDPELRGLAQSLIDQKVKEI). Positions 377–433 (GIQLDQRIILLYMLEWGKEMVDHFHLGDDMDPELRGLAQSLIDQKVKEISNQEPLKI) are interaction with host DAXX.

Belongs to the hantavirus nucleocapsid protein family. As to quaternary structure, homotrimer. Homomultimer. Homomultimerizes and binds to viral genomic RNA to form the nucleocapsid. Interacts with host MAP1LC3B; this interaction participates to the protection of Gn from virus-triggered autophagy. Interacts with host SNAP29; this interaction participates to the protection of glycoprotein N from virus-triggered autophagy. Interacts (via N-terminus) with host RPS19; this interaction probably mediates the loading of the 40S ribosomal subunit on viral capped mRNA during N-mediated translation initiation. Interacts with the viral RdRp. Interacts with host SUMO1 (via N-terminus). Interacts with host DAXX. Interacts with the viral glycoprotein N (via C-terminus). Interacts with the viral glycoprotein C (via C-terminus).

Its subcellular location is the virion. It is found in the host cytoplasm. The protein localises to the host perinuclear region. The protein resides in the host Golgi apparatus. It localises to the host cis-Golgi network. Its function is as follows. Encapsidates the genome protecting it from nucleases. The encapsidated genomic RNA is termed the nucleocapsid (NC) and serves as template for transcription and replication. The nucleocapsid has a left-handed helical structure. As a trimer, specifically binds and acts as a chaperone to unwind the panhandle structure formed by the viral RNA (vRNA) termini. Involved in the transcription and replication initiation of vRNA by mediating primer annealing. Plays a role in cap snatching by sequestering capped RNAs in P bodies for use by the viral RdRp during transcription initiation. Substitutes for the cellular cap-binding complex (eIF4F) to preferentially facilitate the translation of capped mRNAs. Initiates the translation by specifically binding to the cap and 40S ribosomal subunit. Prevents the viral glycoprotein N (Gn) from autophagy-dependent breakdown maybe by blocking autophagosome formation. Inhibits host EIF2AK2/PKR dimerization to prevent PKR-induced translational shutdown in cells and thus the activation of the antiviral state. Also displays sequence-unspecific DNA endonuclease activity. The protein is Nucleoprotein (N) of Homo sapiens (Human).